Here is a 247-residue protein sequence, read N- to C-terminus: Small ribosomal subunit protein uS3 (247 aa).

Residues 39–109 (IRSMIRSFPE…KVQIKVKEIK (71 aa)) enclose the KH type-2 domain. Positions 224–247 (RSRRESGQKSDELVRDERTHAERG) are disordered. Residues 227–247 (RESGQKSDELVRDERTHAERG) are compositionally biased toward basic and acidic residues.

It belongs to the universal ribosomal protein uS3 family. As to quaternary structure, part of the 30S ribosomal subunit. Forms a tight complex with proteins S10 and S14.

Binds the lower part of the 30S subunit head. Binds mRNA in the 70S ribosome, positioning it for translation. The chain is Small ribosomal subunit protein uS3 from Treponema pallidum (strain Nichols).